The following is a 383-amino-acid chain: Succinate--CoA ligase [ADP-forming] subunit beta (383 aa).

One can recognise an ATP-grasp domain in the interval lysine 9–arginine 236. Residues lysine 45, glycine 52 to glycine 54, glutamate 91, alanine 94, and glutamate 99 contribute to the ATP site. Residues asparagine 191 and aspartate 205 each coordinate Mg(2+). Substrate-binding positions include asparagine 256 and glycine 313–threonine 315.

It belongs to the succinate/malate CoA ligase beta subunit family. Heterotetramer of two alpha and two beta subunits. Mg(2+) is required as a cofactor.

It carries out the reaction succinate + ATP + CoA = succinyl-CoA + ADP + phosphate. The enzyme catalyses GTP + succinate + CoA = succinyl-CoA + GDP + phosphate. It participates in carbohydrate metabolism; tricarboxylic acid cycle; succinate from succinyl-CoA (ligase route): step 1/1. Its function is as follows. Succinyl-CoA synthetase functions in the citric acid cycle (TCA), coupling the hydrolysis of succinyl-CoA to the synthesis of either ATP or GTP and thus represents the only step of substrate-level phosphorylation in the TCA. The beta subunit provides nucleotide specificity of the enzyme and binds the substrate succinate, while the binding sites for coenzyme A and phosphate are found in the alpha subunit. In Rubrobacter xylanophilus (strain DSM 9941 / JCM 11954 / NBRC 16129 / PRD-1), this protein is Succinate--CoA ligase [ADP-forming] subunit beta.